The sequence spans 316 residues: Pantothenate kinase (316 aa).

Position 95–102 (95–102) interacts with ATP; that stretch reads GSVAVGKS.

Belongs to the prokaryotic pantothenate kinase family.

The protein localises to the cytoplasm. The catalysed reaction is (R)-pantothenate + ATP = (R)-4'-phosphopantothenate + ADP + H(+). Its pathway is cofactor biosynthesis; coenzyme A biosynthesis; CoA from (R)-pantothenate: step 1/5. The sequence is that of Pantothenate kinase from Enterobacter sp. (strain 638).